A 202-amino-acid polypeptide reads, in one-letter code: Protein phosphatase 1 regulatory subunit 1B (202 aa).

M1 carries the N-acetylmethionine modification. Residues 1 to 202 (MDPKDRKKIQ…QRPAHPEPGT (202 aa)) form a disordered region. Position 34 is a phosphothreonine; by PKA (T34). Over residues 41 to 63 (LSEHSSPEEEASPHQRASGEGHH) the composition is skewed to basic and acidic residues. Phosphoserine occurs at positions 45 and 46. T75 is modified (phosphothreonine; by CDK5). Residues 89–100 (HLQSISNLGENQ) show a composition bias toward polar residues. At S102 the chain carries Phosphoserine. Residues 109-118 (GELRELGYPR) show a composition bias toward basic and acidic residues. The segment covering 119–136 (EEEEEEEEEDEEEEEDSQ) has biased composition (acidic residues). At S135 the chain carries Phosphoserine. Over residues 191 to 202 (EPQRPAHPEPGT) the composition is skewed to basic and acidic residues.

The protein belongs to the protein phosphatase inhibitor 1 family. In terms of processing, dopamine- and cyclic AMP-regulated neuronal phosphoprotein. Phosphorylation of Thr-34 is required for activity.

It is found in the cytoplasm. Inhibitor of protein-phosphatase 1. The protein is Protein phosphatase 1 regulatory subunit 1B (PPP1R1B) of Bos taurus (Bovine).